The chain runs to 407 residues: Imidazolonepropionase (407 aa).

His68 and His70 together coordinate Fe(3+). Positions 68 and 70 each coordinate Zn(2+). Positions 77, 140, and 173 each coordinate 4-imidazolone-5-propanoate. Tyr140 serves as a coordination point for N-formimidoyl-L-glutamate. Position 238 (His238) interacts with Fe(3+). His238 contributes to the Zn(2+) binding site. Residue Gln241 participates in 4-imidazolone-5-propanoate binding. Asp313 lines the Fe(3+) pocket. Position 313 (Asp313) interacts with Zn(2+). Residues Asn315 and Gly317 each coordinate N-formimidoyl-L-glutamate. Position 318 (Thr318) interacts with 4-imidazolone-5-propanoate.

It belongs to the metallo-dependent hydrolases superfamily. HutI family. It depends on Zn(2+) as a cofactor. The cofactor is Fe(3+).

The protein localises to the cytoplasm. It catalyses the reaction 4-imidazolone-5-propanoate + H2O = N-formimidoyl-L-glutamate. It participates in amino-acid degradation; L-histidine degradation into L-glutamate; N-formimidoyl-L-glutamate from L-histidine: step 3/3. Its function is as follows. Catalyzes the hydrolytic cleavage of the carbon-nitrogen bond in imidazolone-5-propanoate to yield N-formimidoyl-L-glutamate. It is the third step in the universal histidine degradation pathway. This is Imidazolonepropionase from Burkholderia mallei (strain ATCC 23344).